Here is a 321-residue protein sequence, read N- to C-terminus: tRNA-dihydrouridine synthase B (321 aa).

Residues 16 to 18 (PMA) and glutamine 70 contribute to the FMN site. The active-site Proton donor is the cysteine 100. FMN-binding positions include lysine 139, 200 to 202 (NGD), and 224 to 225 (GR).

Belongs to the Dus family. DusB subfamily. FMN is required as a cofactor.

It catalyses the reaction a 5,6-dihydrouridine in tRNA + NAD(+) = a uridine in tRNA + NADH + H(+). The enzyme catalyses a 5,6-dihydrouridine in tRNA + NADP(+) = a uridine in tRNA + NADPH + H(+). Its function is as follows. Catalyzes the synthesis of 5,6-dihydrouridine (D), a modified base found in the D-loop of most tRNAs, via the reduction of the C5-C6 double bond in target uridines. In Klebsiella pneumoniae, this protein is tRNA-dihydrouridine synthase B.